Here is a 343-residue protein sequence, read N- to C-terminus: Anthranilate phosphoribosyltransferase (343 aa).

5-phospho-alpha-D-ribose 1-diphosphate is bound by residues Gly-84, 87-88, Thr-92, 94-97, 112-120, and Ser-124; these read GD, NIST, and KHGNRGVSS. Anthranilate is bound at residue Gly-84. Ser-96 serves as a coordination point for Mg(2+). Asn-115 lines the anthranilate pocket. Arg-170 provides a ligand contact to anthranilate. Residues Asp-229 and Glu-230 each contribute to the Mg(2+) site.

This sequence belongs to the anthranilate phosphoribosyltransferase family. As to quaternary structure, homodimer. Mg(2+) is required as a cofactor.

The catalysed reaction is N-(5-phospho-beta-D-ribosyl)anthranilate + diphosphate = 5-phospho-alpha-D-ribose 1-diphosphate + anthranilate. It participates in amino-acid biosynthesis; L-tryptophan biosynthesis; L-tryptophan from chorismate: step 2/5. Catalyzes the transfer of the phosphoribosyl group of 5-phosphorylribose-1-pyrophosphate (PRPP) to anthranilate to yield N-(5'-phosphoribosyl)-anthranilate (PRA). The chain is Anthranilate phosphoribosyltransferase from Burkholderia thailandensis (strain ATCC 700388 / DSM 13276 / CCUG 48851 / CIP 106301 / E264).